The following is a 404-amino-acid chain: Tryptophan synthase beta chain (404 aa).

N6-(pyridoxal phosphate)lysine is present on lysine 98.

The protein belongs to the TrpB family. Tetramer of two alpha and two beta chains. The cofactor is pyridoxal 5'-phosphate.

The enzyme catalyses (1S,2R)-1-C-(indol-3-yl)glycerol 3-phosphate + L-serine = D-glyceraldehyde 3-phosphate + L-tryptophan + H2O. The protein operates within amino-acid biosynthesis; L-tryptophan biosynthesis; L-tryptophan from chorismate: step 5/5. In terms of biological role, the beta subunit is responsible for the synthesis of L-tryptophan from indole and L-serine. The polypeptide is Tryptophan synthase beta chain (Rhodopseudomonas palustris (strain BisA53)).